A 236-amino-acid polypeptide reads, in one-letter code: Ribose-5-phosphate isomerase A (236 aa).

Substrate is bound by residues Thr28–Thr31, Asp83–Asp86, and Lys96–Gly99. The Proton acceptor role is filled by Glu105. Lys123 serves as a coordination point for substrate.

Belongs to the ribose 5-phosphate isomerase family. As to quaternary structure, homodimer.

The enzyme catalyses aldehydo-D-ribose 5-phosphate = D-ribulose 5-phosphate. The protein operates within carbohydrate degradation; pentose phosphate pathway; D-ribose 5-phosphate from D-ribulose 5-phosphate (non-oxidative stage): step 1/1. Its function is as follows. Catalyzes the reversible conversion of ribose-5-phosphate to ribulose 5-phosphate. The sequence is that of Ribose-5-phosphate isomerase A from Methylorubrum extorquens (strain CM4 / NCIMB 13688) (Methylobacterium extorquens).